The primary structure comprises 147 residues: Hemoglobin subunit gamma (147 aa).

Positions 3–147 constitute a Globin domain; that stretch reads HFTAEEKAAI…VATALAHKYH (145 aa). Heme b is bound by residues His64 and His93.

This sequence belongs to the globin family. As to quaternary structure, heterotetramer of two alpha chains and two gamma chains. As to expression, red blood cells.

Its function is as follows. This protein functions as an embryonic globin, but the gene structure and chromosomal location resemble more closely the human gamma chain gene, which codes for a fetal globin. This is Hemoglobin subunit gamma (HBG) from Oryctolagus cuniculus (Rabbit).